The primary structure comprises 462 residues: Ketoisovalerate reductase (462 aa).

The tract at residues 34–55 (PTAVKPDRADRGDFDPGKYPVD) is disordered. The segment covering 38–49 (KPDRADRGDFDP) has biased composition (basic and acidic residues). 72-77 (GPGNVG) provides a ligand contact to NADP(+). A Calmoduling-binding motif is present at residues 167-184 (ADRLRRYLGRCSSVVFAQ). Residue Lys290 is the Proton donor of the active site. Substrate contacts are provided by Asn294, Asn298, and Ser403. Position 415 (Glu415) interacts with NADP(+).

This sequence belongs to the ketopantoate reductase family. Homodimer. Binds to calmodulin in a calcium-independent manner.

The enzyme catalyses (R)-2-hydroxy-3-methylbutanoate + NADP(+) = 3-methyl-2-oxobutanoate + NADPH + H(+). Environmental stimuli such as light and salt stress suppress activity through stimulation of calmodulin (CaM) that binds BEA2 and probably impairs its dimerization. In terms of biological role, ketoisovalerate reductase; part of the gene cluster that mediates the biosynthesis of beauvericin (BEA), a non-ribosomal cyclic hexadepsipeptide that shows antibiotic, antifungal, insecticidal, and cancer cell antiproliferative and antihaptotactic activity. Ketoisovalerate reductase BEA2 catalyzes the NADPH-specific reduction of ketoisovaleric acid to hydroxyisovalerate, a precursor for beauvericin biosynthesis. The nonribosomal cyclodepsipeptide synthetase BEA1 then catalyzes the formation of beauvericin via condensation and cyclization of 3 dipeptidol monomers, each composed of one unit of hydroxyisovalerate and one unit of N-methyl-phenylalanine. In Beauveria bassiana (White muscardine disease fungus), this protein is Ketoisovalerate reductase.